We begin with the raw amino-acid sequence, 344 residues long: Fructose-bisphosphate aldolase (344 aa).

Ser-53 serves as a coordination point for D-glyceraldehyde 3-phosphate. Residue Asp-95 is the Proton donor of the active site. Residues His-96, Asp-131, Glu-161, and His-212 each coordinate Zn(2+). Residue Gly-213 participates in dihydroxyacetone phosphate binding. His-252 lines the Zn(2+) pocket. Dihydroxyacetone phosphate contacts are provided by residues Gly-253–Ser-255 and Asn-274–Thr-277.

This sequence belongs to the class II fructose-bisphosphate aldolase family. It depends on Zn(2+) as a cofactor.

The catalysed reaction is beta-D-fructose 1,6-bisphosphate = D-glyceraldehyde 3-phosphate + dihydroxyacetone phosphate. Its pathway is carbohydrate degradation; glycolysis; D-glyceraldehyde 3-phosphate and glycerone phosphate from D-glucose: step 4/4. In terms of biological role, catalyzes the aldol condensation of dihydroxyacetone phosphate (DHAP or glycerone-phosphate) with glyceraldehyde 3-phosphate (G3P) to form fructose 1,6-bisphosphate (FBP) in gluconeogenesis and the reverse reaction in glycolysis. This Corynebacterium glutamicum (strain ATCC 13032 / DSM 20300 / JCM 1318 / BCRC 11384 / CCUG 27702 / LMG 3730 / NBRC 12168 / NCIMB 10025 / NRRL B-2784 / 534) protein is Fructose-bisphosphate aldolase (fba).